The chain runs to 201 residues: MKLSDVQKRLQAPFPAHAVAWKPGVITKDRSRALMLAHIDARNVQDRLDAVCPDAWSFEVEVVPGTRLPTVKGRLTVLGVSREDIGEAPEGDLGTLKAAASDALKRCAVQFGIGRYLYDLPKQWVAWNDAKREPVSPPELPEWARPDHERSPGGAHLVQAMDQLRYEMPEDLELQREVYKHLKAALGSLHPISGGNQGRAA.

It belongs to the RAD52 family. As to quaternary structure, the truncated form (1-160) of DdrA forms heptameric rings that can assemble into a 3-ring structure.

SsDNA-binding protein that contributes to the ionizing radiation resistance of D.deserti. Plays a role in DNA repair and genome reconstitution, in a RecA-independent process, since DdrA is essential for recovery from severe genomic fragmentation as a result of exposure to severe levels of ionizing radiation in an environment lacking nutrients. In vitro, binds to the 3'-ends of single-stranded DNA, and probably protects them from nuclease degradation. Thus, DdrA is part of a DNA end-protection system that helps to preserve genome integrity following irradiation or desiccation. This Deinococcus deserti (strain DSM 17065 / CIP 109153 / LMG 22923 / VCD115) protein is Single-stranded DNA-binding protein DdrA (ddrA).